The following is a 141-amino-acid chain: Nucleoside diphosphate kinase (141 aa).

Lys-11, Phe-59, Arg-87, Thr-93, Arg-104, and Asn-114 together coordinate ATP. Catalysis depends on His-117, which acts as the Pros-phosphohistidine intermediate.

It belongs to the NDK family. In terms of assembly, homotetramer. Mg(2+) is required as a cofactor.

It localises to the cytoplasm. It carries out the reaction a 2'-deoxyribonucleoside 5'-diphosphate + ATP = a 2'-deoxyribonucleoside 5'-triphosphate + ADP. It catalyses the reaction a ribonucleoside 5'-diphosphate + ATP = a ribonucleoside 5'-triphosphate + ADP. In terms of biological role, major role in the synthesis of nucleoside triphosphates other than ATP. The ATP gamma phosphate is transferred to the NDP beta phosphate via a ping-pong mechanism, using a phosphorylated active-site intermediate. The protein is Nucleoside diphosphate kinase of Bdellovibrio bacteriovorus (strain ATCC 15356 / DSM 50701 / NCIMB 9529 / HD100).